The following is a 143-amino-acid chain: AP-2 complex subunit sigma (143 aa).

It belongs to the adaptor complexes small subunit family. In terms of assembly, adaptor protein complex 2 (AP-2) is a heterotetramer composed of two large adaptins (alpha-type subunit APL3 and beta-type subunit APL1), a medium chain (mu-type subunit APM4) and a small adaptin (sigma-type subunit APS2).

Its subcellular location is the cell membrane. It localises to the membrane. The protein localises to the coated pit. In terms of biological role, component of the adaptor complexes which link clathrin to receptors in coated vesicles. Clathrin-associated protein complexes are believed to interact with the cytoplasmic tails of membrane proteins, leading to their selection and concentration. This chain is AP-2 complex subunit sigma (APS2), found in Gibberella zeae (strain ATCC MYA-4620 / CBS 123657 / FGSC 9075 / NRRL 31084 / PH-1) (Wheat head blight fungus).